The sequence spans 170 residues: Ribosome maturation factor RimM (170 aa).

The 73-residue stretch at 93 to 165 folds into the PRC barrel domain; that stretch reads PDEFHDHELI…RVVIDPPPGL (73 aa).

This sequence belongs to the RimM family. Binds ribosomal protein uS19.

It is found in the cytoplasm. An accessory protein needed during the final step in the assembly of 30S ribosomal subunit, possibly for assembly of the head region. Essential for efficient processing of 16S rRNA. May be needed both before and after RbfA during the maturation of 16S rRNA. It has affinity for free ribosomal 30S subunits but not for 70S ribosomes. This Thermobifida fusca (strain YX) protein is Ribosome maturation factor RimM.